The primary structure comprises 485 residues: Pyruvate kinase (485 aa).

R33 contacts substrate. Positions 35, 37, 67, and 68 each coordinate K(+). 35–38 (NFSH) contributes to the ATP binding site. R74 and K155 together coordinate ATP. Residue E221 participates in Mg(2+) binding. G244, D245, and T277 together coordinate substrate. Residue D245 coordinates Mg(2+).

Belongs to the pyruvate kinase family. In terms of assembly, homotetramer. Mg(2+) is required as a cofactor. K(+) serves as cofactor.

The enzyme catalyses pyruvate + ATP = phosphoenolpyruvate + ADP + H(+). Its pathway is carbohydrate degradation; glycolysis; pyruvate from D-glyceraldehyde 3-phosphate: step 5/5. The sequence is that of Pyruvate kinase (pyk) from Chlamydia trachomatis serovar L2 (strain ATCC VR-902B / DSM 19102 / 434/Bu).